Here is a 197-residue protein sequence, read N- to C-terminus: Phosphoheptose isomerase (197 aa).

Residues 36-197 (LFAALANNGR…IDALLLGDTE (162 aa)) form the SIS domain. 51–53 (NGG) is a substrate binding site. Residues histidine 60 and glutamate 64 each coordinate Zn(2+). Residues glutamate 64, 93–94 (ND), 119–121 (STS), serine 124, and glutamine 174 contribute to the substrate site. Positions 174 and 182 each coordinate Zn(2+).

The protein belongs to the SIS family. GmhA subfamily. As to quaternary structure, homotetramer. Zn(2+) serves as cofactor.

It is found in the cytoplasm. The catalysed reaction is 2 D-sedoheptulose 7-phosphate = D-glycero-alpha-D-manno-heptose 7-phosphate + D-glycero-beta-D-manno-heptose 7-phosphate. It functions in the pathway carbohydrate biosynthesis; D-glycero-D-manno-heptose 7-phosphate biosynthesis; D-glycero-alpha-D-manno-heptose 7-phosphate and D-glycero-beta-D-manno-heptose 7-phosphate from sedoheptulose 7-phosphate: step 1/1. Its function is as follows. Catalyzes the isomerization of sedoheptulose 7-phosphate in D-glycero-D-manno-heptose 7-phosphate. In Bordetella avium (strain 197N), this protein is Phosphoheptose isomerase.